The chain runs to 319 residues: MYLQSSLALVLLRAAVVHGYANPGACSGACNIHDPSLIQNGDGTYYRFSTGNNISFASASSIEGPWTALGSVLPGGSSIDNSGRYDPWAPDVQKVGDLYYLYYAVSSFGTQESAIGLATSETMEEGTWTDKGSIVTSTTGDQYNAIDANLLVDGSANYLTFGSFWQDIFQVTLNGDATSSTSTPVNVAFDPATTHPVEGAYLYKYGDYYYLFYSWGTCCGYDTSRPAEGEEYKIKVCRSSTPTGNFVDASGVACTDGGGTVVLESHDNVYGPGGQGVYTDPNLGPVLYYHYVDTTIGYADSQKLFGWNAIDFSSGWPSV.

The N-terminal stretch at 1 to 19 (MYLQSSLALVLLRAAVVHG) is a signal peptide. The Proton acceptor role is filled by D34. N53 carries an N-linked (GlcNAc...) asparagine glycan. E198 functions as the Proton donor in the catalytic mechanism.

Belongs to the glycosyl hydrolase 43 family.

It localises to the secreted. The enzyme catalyses Endohydrolysis of (1-&gt;5)-alpha-arabinofuranosidic linkages in (1-&gt;5)-arabinans.. Its pathway is glycan metabolism; L-arabinan degradation. Endo-1,5-alpha-L-arabinanase involved in degradation of pectin. Its preferred substrate is linear 1,5-alpha-L-arabinan. The protein is Probable arabinan endo-1,5-alpha-L-arabinosidase A (abnA) of Aspergillus flavus (strain ATCC 200026 / FGSC A1120 / IAM 13836 / NRRL 3357 / JCM 12722 / SRRC 167).